The primary structure comprises 140 residues: Putative cell wall protein (140 aa).

The first 21 residues, 1 to 21 (MASSLITSAVIVVVLSLVLGS), serve as a signal peptide directing secretion. Gly residues predominate over residues 85–98 (TGGGIPSYNGGQGA). Residues 85–140 (TGGGIPSYNGGQGAGPHTQLPGGDDTLVPNPGFEAPTPTIGAGTGSNGQVPPVPLP) form a disordered region.

Inflorescence.

The protein localises to the secreted. It localises to the cell wall. The sequence is that of Putative cell wall protein from Arabidopsis thaliana (Mouse-ear cress).